We begin with the raw amino-acid sequence, 303 residues long: Cyclin-dependent kinase B1-1 (303 aa).

The region spanning 4-295 (YEKLEKVGEG…AKAAMEHPYF (292 aa)) is the Protein kinase domain. ATP-binding positions include 10–18 (VGEGTYGKV) and Lys-33. The residue at position 14 (Thr-14) is a Phosphothreonine. Phosphotyrosine is present on Tyr-15. Asp-136 serves as the catalytic Proton acceptor. A Phosphothreonine modification is found at Thr-170.

Belongs to the protein kinase superfamily. CMGC Ser/Thr protein kinase family. CDC2/CDKX subfamily. In terms of tissue distribution, expressed in actively dividing cells: root and shoot apical meristems, and young leaves.

The enzyme catalyses L-seryl-[protein] + ATP = O-phospho-L-seryl-[protein] + ADP + H(+). It catalyses the reaction L-threonyl-[protein] + ATP = O-phospho-L-threonyl-[protein] + ADP + H(+). The catalysed reaction is [DNA-directed RNA polymerase] + ATP = phospho-[DNA-directed RNA polymerase] + ADP + H(+). The polypeptide is Cyclin-dependent kinase B1-1 (CDKB1-1) (Oryza sativa subsp. japonica (Rice)).